We begin with the raw amino-acid sequence, 547 residues long: uncharacterized protein (547 aa).

Topologically, residues 1–19 (MVRLNHAASYFMPIFCSTR) are cytoplasmic. The helical transmembrane segment at 20 to 40 (PHIVILSALFSISLFSLFYAS) threads the bilayer. Over 41-64 (SELLLHQYDDPLMFKPNSQDYFRT) the chain is Vacuolar. Residues 65 to 85 (FLLGLFSPFLYYFLKTFLFNI) traverse the membrane as a helical segment. The Cytoplasmic segment spans residues 86–89 (NQRF). Residues 90–110 (LILNLIVDFPINDVFMLLILI) form a helical membrane-spanning segment. The Vacuolar segment spans residues 111 to 139 (GLAYPQVQDHEGGTIKHKECSWHIIPRQA). A helical transmembrane segment spans residues 140 to 160 (YIFGISWALGEFTICIIGNLF). Residues 161–340 (NYQEIADPNI…RFIAFSTAYQ (180 aa)) lie on the Cytoplasmic side of the membrane. A Phosphoserine modification is found at Ser-225. The tract at residues 237-271 (PIKPLRSSSSTYGSIRQQPHENKKQLHVPDNSQDD) is disordered. Positions 242–253 (RSSSSTYGSIRQ) are enriched in polar residues. A helical membrane pass occupies residues 341-361 (LVTGLLLMILVVGSNIMLTIG). At 362 to 394 (ESLILSMYFVYVRGHEGLFTPVVNYFGSRTISN) the chain is on the vacuolar side. A helical transmembrane segment spans residues 395–415 (FILCVIIPFISLNFLINTSIY). The Cytoplasmic segment spans residues 416–523 (LRRELDDWFN…NWRALARNDS (108 aa)). The helical transmembrane segment at 524-544 (FVLGVMVSWSLLVFVTGILST) threads the bilayer. Topologically, residues 545–547 (VYI) are vacuolar.

The protein resides in the vacuole membrane. This is an uncharacterized protein from Saccharomyces cerevisiae (strain ATCC 204508 / S288c) (Baker's yeast).